The sequence spans 212 residues: Thymidylate kinase (212 aa).

10–17 serves as a coordination point for ATP; sequence GPEGAGKT.

Belongs to the thymidylate kinase family.

It catalyses the reaction dTMP + ATP = dTDP + ADP. Its function is as follows. Phosphorylation of dTMP to form dTDP in both de novo and salvage pathways of dTTP synthesis. This chain is Thymidylate kinase, found in Bacillus licheniformis (strain ATCC 14580 / DSM 13 / JCM 2505 / CCUG 7422 / NBRC 12200 / NCIMB 9375 / NCTC 10341 / NRRL NRS-1264 / Gibson 46).